The sequence spans 768 residues: DNA ligase (768 aa).

Residues 30–34 (DAEYD), 79–80 (SL), and glutamate 190 contribute to the NAD(+) site. Catalysis depends on lysine 192, which acts as the N6-AMP-lysine intermediate. The NAD(+) site is built by arginine 213, glutamate 250, lysine 367, and lysine 391. Residues cysteine 485, cysteine 488, cysteine 503, and cysteine 509 each contribute to the Zn(2+) site. A BRCT domain is found at 678 to 767 (AAEQPLSGLS…IPPEIQARMQ (90 aa)).

The protein belongs to the NAD-dependent DNA ligase family. LigA subfamily. Mg(2+) is required as a cofactor. It depends on Mn(2+) as a cofactor.

The catalysed reaction is NAD(+) + (deoxyribonucleotide)n-3'-hydroxyl + 5'-phospho-(deoxyribonucleotide)m = (deoxyribonucleotide)n+m + AMP + beta-nicotinamide D-nucleotide.. In terms of biological role, DNA ligase that catalyzes the formation of phosphodiester linkages between 5'-phosphoryl and 3'-hydroxyl groups in double-stranded DNA using NAD as a coenzyme and as the energy source for the reaction. It is essential for DNA replication and repair of damaged DNA. The protein is DNA ligase of Magnetococcus marinus (strain ATCC BAA-1437 / JCM 17883 / MC-1).